A 305-amino-acid polypeptide reads, in one-letter code: Phosphoribosylaminoimidazole-succinocarboxamide synthase (305 aa).

Belongs to the SAICAR synthetase family.

It carries out the reaction 5-amino-1-(5-phospho-D-ribosyl)imidazole-4-carboxylate + L-aspartate + ATP = (2S)-2-[5-amino-1-(5-phospho-beta-D-ribosyl)imidazole-4-carboxamido]succinate + ADP + phosphate + 2 H(+). The protein operates within purine metabolism; IMP biosynthesis via de novo pathway; 5-amino-1-(5-phospho-D-ribosyl)imidazole-4-carboxamide from 5-amino-1-(5-phospho-D-ribosyl)imidazole-4-carboxylate: step 1/2. In Tropheryma whipplei (strain TW08/27) (Whipple's bacillus), this protein is Phosphoribosylaminoimidazole-succinocarboxamide synthase.